The chain runs to 317 residues: Flavin-dependent thymidylate synthase (317 aa).

Serine 46 provides a ligand contact to FAD. Positions 55 to 166 (FEWKKEKWIE…ELETDMDFYT (112 aa)) are insert. The 218-residue stretch at 100-317 (AVKERIKEAF…YRGTDKKNVI (218 aa)) folds into the ThyX domain. DUMP-binding positions include 178–181 (QWMR), 189–193 (EVSKR), and arginine 259. FAD is bound by residues 181–183 (RHR) and glutamate 189. Residues 181–191 (RHRFGSYNEVS) carry the ThyX motif motif. Asparagine 281 contacts FAD. DUMP is bound at residue arginine 286. The active-site Involved in ionization of N3 of dUMP, leading to its activation is the arginine 286.

Belongs to the thymidylate synthase ThyX family. In terms of assembly, homotetramer. FAD serves as cofactor.

It catalyses the reaction dUMP + (6R)-5,10-methylene-5,6,7,8-tetrahydrofolate + NADPH + H(+) = dTMP + (6S)-5,6,7,8-tetrahydrofolate + NADP(+). The protein operates within pyrimidine metabolism; dTTP biosynthesis. Catalyzes the reductive methylation of 2'-deoxyuridine-5'-monophosphate (dUMP) to 2'-deoxythymidine-5'-monophosphate (dTMP) while utilizing 5,10-methylenetetrahydrofolate (mTHF) as the methyl donor, and NADPH and FADH(2) as the reductant. This chain is Flavin-dependent thymidylate synthase, found in Aquifex aeolicus (strain VF5).